Here is a 153-residue protein sequence, read N- to C-terminus: Small ribosomal subunit protein uS12m (153 aa).

Residues 1 to 20 (MLSRFMSNTWCTPLRQAQRL) constitute a mitochondrion transit peptide.

The protein belongs to the universal ribosomal protein uS12 family. As to quaternary structure, component of the mitochondrial small ribosomal subunit (mt-SSU). Mature yeast 74S mitochondrial ribosomes consist of a small (37S) and a large (54S) subunit. The 37S small subunit contains a 15S ribosomal RNA (15S mt-rRNA) and 34 different proteins. The 54S large subunit contains a 21S rRNA (21S mt-rRNA) and 46 different proteins. uS12m forms part of the decoding center of the mt-SSU.

The protein resides in the mitochondrion. Component of the mitochondrial ribosome (mitoribosome), a dedicated translation machinery responsible for the synthesis of mitochondrial genome-encoded proteins, including at least some of the essential transmembrane subunits of the mitochondrial respiratory chain. The mitoribosomes are attached to the mitochondrial inner membrane and translation products are cotranslationally integrated into the membrane. uS12m is required for respiratory growth. This chain is Small ribosomal subunit protein uS12m (MRPS12), found in Saccharomyces cerevisiae (strain ATCC 204508 / S288c) (Baker's yeast).